We begin with the raw amino-acid sequence, 913 residues long: Ubiquitin carboxyl-terminal hydrolase 20 (913 aa).

A UBP-type zinc finger spans residues 6-111; it reads DLCPHLDSIG…GSSKFSEQDS (106 aa). Zn(2+) is bound by residues Cys8, His10, Cys30, Cys33, Cys43, Cys48, Cys53, His60, His64, His70, Cys83, and Cys86. Phosphoserine is present on residues Ser111, Ser131, and Ser133. The USP domain maps to 144 to 684; the sequence is TGMKNLGNSC…EGYVLFYRKS (541 aa). Residue Cys153 is the Nucleophile of the active site. The disordered stretch occupies residues 256 to 414; the sequence is LTEARDSDSS…SSSPPRASPV (159 aa). Thr257 carries the phosphothreonine modification. Basic and acidic residues predominate over residues 258–278; sequence EARDSDSSDTDEKREGDRSPS. A Phosphoserine modification is found at Ser304. The segment covering 315–331 has biased composition (basic and acidic residues); that stretch reads EASRAISEKERMKDRKF. Ser367 bears the Phosphoserine mark. Thr376 carries the phosphothreonine modification. Phosphoserine occurs at positions 407 and 412. The active-site Proton acceptor is the His642. 2 consecutive DUSP domains span residues 686 to 779 and 788 to 891; these read EEAV…LYVC and ALAK…RQSV.

This sequence belongs to the peptidase C19 family. USP20/USP33 subfamily. In terms of assembly, interacts with VHL, leading to its ubiquitination and subsequent degradation. Interacts with CCP110. Interacts with DIO2. Interacts with HIF1A. Interacts with ADRB2. Interacts with USP18. In terms of processing, ubiquitinated via a VHL-dependent pathway for proteasomal degradation.

The protein resides in the cytoplasm. The protein localises to the endoplasmic reticulum. Its subcellular location is the perinuclear region. It localises to the cytoskeleton. It is found in the microtubule organizing center. The protein resides in the centrosome. The enzyme catalyses Thiol-dependent hydrolysis of ester, thioester, amide, peptide and isopeptide bonds formed by the C-terminal Gly of ubiquitin (a 76-residue protein attached to proteins as an intracellular targeting signal).. Functionally, deubiquitinating enzyme that plays a role in many cellular processes including autophagy, cellular antiviral response or membrane protein biogenesis. Attenuates TLR4-mediated NF-kappa-B signaling by cooperating with beta-arrestin-2/ARRB2 and inhibiting TRAF6 autoubiquitination. Promotes cellular antiviral responses by deconjugating 'Lys-33' and 'Lys-48'-linked ubiquitination of STING1 leading to its stabilization. Plays an essential role in autophagy induction by regulating the ULK1 stability through deubiquitination of ULK1. Acts as a positive regulator for NF-kappa-B activation by TNF-alpha through deubiquitinating 'Lys-48'-linked polyubiquitination of SQSTM1, leading to its increased stability. Acts as a regulator of G-protein coupled receptor (GPCR) signaling by mediating the deubiquitination beta-2 adrenergic receptor (ADRB2). Plays a central role in ADRB2 recycling and resensitization after prolonged agonist stimulation by constitutively binding ADRB2, mediating deubiquitination of ADRB2 and inhibiting lysosomal trafficking of ADRB2. Upon dissociation, it is probably transferred to the translocated beta-arrestins, possibly leading to beta-arrestins deubiquitination and disengagement from ADRB2. This suggests the existence of a dynamic exchange between the ADRB2 and beta-arrestins. Deubiquitinates DIO2, thereby regulating thyroid hormone regulation. Deubiquitinates HIF1A, leading to stabilize HIF1A and enhance HIF1A-mediated activity. Deubiquitinates MCL1, a pivotal member of the anti-apoptotic Bcl-2 protein family to regulate its stability. Within the endoplasmic reticulum, participates with USP33 in the rescue of post-translationally targeted membrane proteins that are inappropriately ubiquitinated by the cytosolic protein quality control in the cytosol. This Pongo abelii (Sumatran orangutan) protein is Ubiquitin carboxyl-terminal hydrolase 20 (USP20).